Consider the following 155-residue polypeptide: 3-hydroxyacyl-[acyl-carrier-protein] dehydratase FabZ (155 aa).

His-58 is a catalytic residue.

This sequence belongs to the thioester dehydratase family. FabZ subfamily.

The protein resides in the cytoplasm. It carries out the reaction a (3R)-hydroxyacyl-[ACP] = a (2E)-enoyl-[ACP] + H2O. In terms of biological role, involved in unsaturated fatty acids biosynthesis. Catalyzes the dehydration of short chain beta-hydroxyacyl-ACPs and long chain saturated and unsaturated beta-hydroxyacyl-ACPs. The chain is 3-hydroxyacyl-[acyl-carrier-protein] dehydratase FabZ from Rhizobium johnstonii (strain DSM 114642 / LMG 32736 / 3841) (Rhizobium leguminosarum bv. viciae).